Reading from the N-terminus, the 122-residue chain is Large ribosomal subunit protein uL18 (122 aa).

Residues 1 to 19 show a composition bias toward basic residues; sequence MSKLSRKQQTQKRHKRLRR. The tract at residues 1–27 is disordered; the sequence is MSKLSRKQQTQKRHKRLRRNLSGTESR.

This sequence belongs to the universal ribosomal protein uL18 family. Part of the 50S ribosomal subunit; part of the 5S rRNA/L5/L18/L25 subcomplex. Contacts the 5S and 23S rRNAs.

Its function is as follows. This is one of the proteins that bind and probably mediate the attachment of the 5S RNA into the large ribosomal subunit, where it forms part of the central protuberance. The polypeptide is Large ribosomal subunit protein uL18 (Prochlorococcus marinus (strain NATL1A)).